Here is a 215-residue protein sequence, read N- to C-terminus: Peptide methionine sulfoxide reductase MsrA (215 aa).

Residue Cys-58 is part of the active site.

Belongs to the MsrA Met sulfoxide reductase family.

The catalysed reaction is L-methionyl-[protein] + [thioredoxin]-disulfide + H2O = L-methionyl-(S)-S-oxide-[protein] + [thioredoxin]-dithiol. It catalyses the reaction [thioredoxin]-disulfide + L-methionine + H2O = L-methionine (S)-S-oxide + [thioredoxin]-dithiol. Functionally, has an important function as a repair enzyme for proteins that have been inactivated by oxidation. Catalyzes the reversible oxidation-reduction of methionine sulfoxide in proteins to methionine. This chain is Peptide methionine sulfoxide reductase MsrA, found in Pseudomonas aeruginosa (strain UCBPP-PA14).